We begin with the raw amino-acid sequence, 292 residues long: uncharacterized protein (292 aa).

NADP(+) is bound by residues leucine 17, aspartate 55, asparagine 82, and lysine 115. Serine 134 serves as the catalytic Proton donor. Residues tyrosine 148, lysine 152, and threonine 184 each coordinate NADP(+). Tyrosine 148 serves as the catalytic Proton acceptor. The active-site Lowers pKa of active site Tyr is the lysine 152.

This sequence belongs to the short-chain dehydrogenases/reductases (SDR) family.

The protein localises to the cytoplasm. This is an uncharacterized protein from Schizosaccharomyces pombe (strain 972 / ATCC 24843) (Fission yeast).